We begin with the raw amino-acid sequence, 492 residues long: Chitooligosaccharide oxidase (492 aa).

An N-terminal signal peptide occupies residues Met1–Ala19. In terms of domain architecture, FAD-binding PCMH-type spans Leu57 to Ala229. A cross-link (6-(S-cysteinyl)-8alpha-(pros-histidyl)-FAD (His-Cys)) is located at residues His94–Cys154.

It belongs to the oxygen-dependent FAD-linked oxidoreductase family. The cofactor is FAD. The FAD cofactor is bound via a bicovalent 6-S-cysteinyl, 8alpha-N1-histidyl FAD linkage.

The protein resides in the secreted. It catalyses the reaction N,N'-diacetylchitobiose + O2 = N,N'-diacetylchitobiono-1,5-lactone + H2O2. It carries out the reaction N,N',N''-triacetylchitotriose + O2 = N,N',N''-triacetylchitotriono-1,5-lactone + H2O2. The catalysed reaction is N,N',N'',N'''-tetraacetylchitotetraose + O2 = N,N',N'',N'''-tetraacetylchitotetraono-1,5-lactone + H2O2. Functionally, catalyzes the selective oxidation of C1 hydroxyl moieties on chitooligosaccharides with concomitant reduction of molecular oxygen to hydrogen peroxide. This results in the formation of the corresponding lactones, which typically undergo spontaneous hydrolysis. Chitooligosaccharides are homo- or heterooligomers of N-acetylglucosamine (GlcNAc) and D-glucosamine which are linked through beta-1,4-glycosidic bonds. For optimal substrate binding at least 2 GlcNAc units are needed, and chitooligosaccharide oxidase is most efficient on chitobiose, chitotriose and chitotetraose. This chain is Chitooligosaccharide oxidase, found in Gibberella zeae (strain ATCC MYA-4620 / CBS 123657 / FGSC 9075 / NRRL 31084 / PH-1) (Wheat head blight fungus).